Here is a 634-residue protein sequence, read N- to C-terminus: Putative ABC transporter ATP-binding protein MG015 homolog (634 aa).

6 helical membrane passes run 54-74, 111-131, 189-209, 213-233, 296-316, and 325-345; these read VLYV…NSIL, LTIV…FNVA, VGGQ…ILFV, VIAL…FLFL, VFIY…SISI, and IPSF…IAAL. Residues 54–364 enclose the ABC transmembrane type-1 domain; that stretch reads VLYVMVCAIF…IFSLWNLIQL (311 aa). The region spanning 397 to 631 is the ABC transporter domain; sequence IRFEKVVFGY…NGFYARLKRS (235 aa). 430–437 is a binding site for ATP; the sequence is GPTGAGKS.

Belongs to the ABC transporter superfamily.

Its subcellular location is the cell membrane. This Mycoplasma pneumoniae (strain ATCC 29342 / M129 / Subtype 1) (Mycoplasmoides pneumoniae) protein is Putative ABC transporter ATP-binding protein MG015 homolog.